A 370-amino-acid chain; its full sequence is Protein FAM110B (370 aa).

Disordered stretches follow at residues 127 to 151 (SSEGSSSGSGHKHSSRNWPPHRSEA) and 237 to 256 (KSPEADPVEPACGVSRRPSL). Phosphoserine is present on residues Ser238 and Ser301. A disordered region spans residues 317 to 337 (DCEQSQDSNSDLRNDDSANDR). Basic and acidic residues predominate over residues 326–335 (SDLRNDDSAN).

This sequence belongs to the FAM110 family. As to expression, detected in thyroid, spleen and testis, and at lower levels in stomach, spinal cord, lymph node, trachea, adrenal gland, prostate, ovary and intestine.

The protein resides in the cytoplasm. Its subcellular location is the cytoskeleton. The protein localises to the microtubule organizing center. It localises to the centrosome. Its function is as follows. May be involved in tumor progression. The protein is Protein FAM110B (FAM110B) of Homo sapiens (Human).